Consider the following 157-residue polypeptide: XylDLEGF operon transcriptional activator 2 (157 aa).

In terms of domain architecture, HTH araC/xylS-type spans 39–140 (ERVVQFIEEN…GELPSDTLSL (102 aa)). DNA-binding regions (H-T-H motif) lie at residues 56–77 (EQLAELALMSPRSLYTMFEKHT) and 107–130 (ITEVALDYGFLHLGRFAEKYRSTF).

The protein resides in the cytoplasm. Functionally, regulatory protein of the TOL plasmid xyl operons. XylS activates the xylXYZLTEGFJQKIH operon required for the degradation of toluene, m-xylene and p-xylene. The polypeptide is XylDLEGF operon transcriptional activator 2 (xylS2) (Pseudomonas putida (Arthrobacter siderocapsulatus)).